Here is a 1222-residue protein sequence, read N- to C-terminus: MSQPPPPPPPLPPPPPPPEAPQTPSSLASAAASGGLLKRRDRRILSGSCPDPKCQARLFFPASGSVSIECTECGQRHEQQQLLGVEEVTDPDVVLHNLLRNALLGVTGAPKKNTELVKVMGLSNYHCKLLSPILARYGMDKQTGRAKLLRDMNQGELFDCALLGDRAFLIEPEHVNTVGYGKDRSGSLLYLHDTLEDIKRANKSQECLIPVHVDGDGHCLVHAVSRALVGRELFWHALRENLKQHFQQHLARYQALFHDFIDAAEWEDIINECDPLFVPPEGVPLGLRNIHIFGLANVLHRPIILLDSLSGMRSSGDYSATFLPGLIPAEKCTGKDGHLNKPICIAWSSSGRNHYIPLVGIKGAALPKLPMNLLPKAWGVPQDLIKKYIKLEEDGGCVIGGDRSLQDKYLLRLVAAMEEVFMDKHGIHPSLVADVHQYFYRRTGVIGVQPEEVTAAAKKAVMDNRLHKCLLCGALSELHVPPEWLAPGGKLYNLAKSTHGQLRTDKNYSFPLNNLVCSYDSVKDVLVPDYGMSNLTACNWCHGTSVRKVRGDGSIVYLDGDRTNSRSTGGKCGCGFKHFWDGKEYDNLPEAFPITLEWGGRVVRETVYWFQYESDSSLNSNVYDVAMKLVTKHFPGEFGSEILVQKVVHTILHQTAKKNPDDYTPVNIDGAHAQRVGDVQGQESESQLPTKIILTGQKTKTLHKEELNMSKTERTIQQNITEQASVMQKRKTEKLKQEQKGQPRTVSPSTIRDGPSSAPATPTKAPYSPTTSKEKKIRITTNDGRQSMVTLKSSTTFFELQESIAREFNIPPYLQCIRYGFPPKELMPPQAGMEKEPVPLQHGDRITIEILKSKAEGGQSAAAHSAHTVKQEDIAVTGKLSSKELQEQAEKEMYSLCLLATLMGEDVWSYAKGLPHMFQQGGVFYSIMKKTMGMADGKHCTFPHLPGKTFVYNASEDRLELCVDAAGHFPIGPDVEDLVKEAVSQVRAEATTRSRESSPSHGLLKLGSGGVVKKKSEQLHNVTAFQGKGHSLGTASGNPHLDPRARETSVVRKHNTGTDFSNSSTKTEPSVFTASSSNSELIRIAPGVVTMRDGRQLDPDLVEAQRKKLQEMVSSIQASMDRHLRDQSTEQSPSDLPQRKTEVVSSSAKSGSLQTGLPESFPLTGGTENLNTETTDGCVADALGAAFATRSKAQRGNSVEELEEMDSQDAEMTNTTEPMDHS.

Residues 1 to 21 (MSQPPPPPPPLPPPPPPPEAP) show a composition bias toward pro residues. Positions 1-36 (MSQPPPPPPPLPPPPPPPEAPQTPSSLASAAASGGL) are disordered. Over residues 25–36 (SSLASAAASGGL) the composition is skewed to low complexity. The region spanning 208-361 (LIPVHVDGDG…RNHYIPLVGI (154 aa)) is the OTU domain. Residue aspartate 216 is part of the active site. The Nucleophile role is filled by cysteine 219. Histidine 354 is an active-site residue. The residue at position 408 (lysine 408) is an N6-acetyllysine. 3 disordered regions span residues 725 to 776 (SVMQ…KEKK), 989 to 1009 (EATT…LGSG), and 1024 to 1074 (AFQG…VFTA). Phosphoserine occurs at positions 747 and 757. Residues 755 to 771 (PSSAPATPTKAPYSPTT) are compositionally biased toward low complexity. Threonine 763 is modified (phosphothreonine). Serine 768, serine 994, and serine 998 each carry phosphoserine. The segment covering 1041–1050 (LDPRARETSV) has biased composition (basic and acidic residues). Residues 1057-1074 (GTDFSNSSTKTEPSVFTA) show a composition bias toward polar residues. Serine 1077 is modified (phosphoserine). Disordered stretches follow at residues 1113–1175 (VSSI…TETT) and 1188–1222 (ATRS…MDHS). Residues 1143 to 1157 (VVSSSAKSGSLQTGL) show a composition bias toward polar residues. The span at 1163–1175 (LTGGTENLNTETT) shows a compositional bias: low complexity. Serine 1198 carries the phosphoserine modification. Over residues 1200–1209 (EELEEMDSQD) the composition is skewed to acidic residues. Serine 1207 is subject to Phosphoserine; by ATM. The segment covering 1210-1222 (AEMTNTTEPMDHS) has biased composition (polar residues).

In terms of assembly, binds VCP and the ternary complex containing STX5A, NSFL1C and VCP. Post-translationally, phosphorylated at Ser-1207 by ATM or ATR following induction of covalent DNA-protein cross-links (DPCs).

The protein localises to the nucleus. It localises to the cytoplasm. Its subcellular location is the endoplasmic reticulum. The protein resides in the golgi apparatus. It is found in the golgi stack. The catalysed reaction is Thiol-dependent hydrolysis of ester, thioester, amide, peptide and isopeptide bonds formed by the C-terminal Gly of ubiquitin (a 76-residue protein attached to proteins as an intracellular targeting signal).. Deubiquitinating enzyme involved in DNA repair and reassembly of the Golgi apparatus and the endoplasmic reticulum following mitosis. Necessary for VCP-mediated reassembly of Golgi stacks after mitosis. Plays a role in VCP-mediated formation of transitional endoplasmic reticulum (tER). Mediates dissociation of the ternary complex containing STX5A, NSFL1C and VCP. Also involved in DNA repair following phosphorylation by ATM or ATR: acts by catalyzing deubiquitination of SPRTN, thereby promoting SPRTN recruitment to chromatin and subsequent proteolytic cleavage of covalent DNA-protein cross-links (DPCs). Hydrolyzes 'Lys-11'- and 'Lys-48'-linked polyubiquitin chains. Functionally, (Microbial infection) Regulates the duration of C.botulinum neurotoxin type A (BoNT/A) intoxication by catalyzing deubiquitination of Botulinum neurotoxin A light chain (LC), thereby preventing LC degradation by the proteasome, and accelerating botulinum neurotoxin intoxication in patients. The polypeptide is Deubiquitinating protein VCPIP1 (Homo sapiens (Human)).